The following is a 180-amino-acid chain: ATP-dependent protease subunit HslV (180 aa).

Threonine 6 is a catalytic residue. Residues alanine 164, cysteine 167, and threonine 170 each coordinate Na(+).

It belongs to the peptidase T1B family. HslV subfamily. A double ring-shaped homohexamer of HslV is capped on each side by a ring-shaped HslU homohexamer. The assembly of the HslU/HslV complex is dependent on binding of ATP.

The protein localises to the cytoplasm. The enzyme catalyses ATP-dependent cleavage of peptide bonds with broad specificity.. Its activity is regulated as follows. Allosterically activated by HslU binding. Functionally, protease subunit of a proteasome-like degradation complex believed to be a general protein degrading machinery. In Borrelia duttonii (strain Ly), this protein is ATP-dependent protease subunit HslV.